Consider the following 428-residue polypeptide: 3-phosphoshikimate 1-carboxyvinyltransferase (428 aa).

The 3-phosphoshikimate site is built by Lys-20, Ser-21, and Arg-25. Residue Lys-20 participates in phosphoenolpyruvate binding. Residues Gly-92 and Arg-120 each contribute to the phosphoenolpyruvate site. 3-phosphoshikimate-binding residues include Ser-166, Gln-168, Asp-314, and Lys-341. Residue Gln-168 coordinates phosphoenolpyruvate. Residue Asp-314 is the Proton acceptor of the active site. Residues Arg-345 and Arg-387 each coordinate phosphoenolpyruvate.

The protein belongs to the EPSP synthase family. In terms of assembly, monomer.

The protein localises to the cytoplasm. The enzyme catalyses 3-phosphoshikimate + phosphoenolpyruvate = 5-O-(1-carboxyvinyl)-3-phosphoshikimate + phosphate. The protein operates within metabolic intermediate biosynthesis; chorismate biosynthesis; chorismate from D-erythrose 4-phosphate and phosphoenolpyruvate: step 6/7. Functionally, catalyzes the transfer of the enolpyruvyl moiety of phosphoenolpyruvate (PEP) to the 5-hydroxyl of shikimate-3-phosphate (S3P) to produce enolpyruvyl shikimate-3-phosphate and inorganic phosphate. The sequence is that of 3-phosphoshikimate 1-carboxyvinyltransferase from Listeria innocua serovar 6a (strain ATCC BAA-680 / CLIP 11262).